The primary structure comprises 239 residues: Large ribosomal subunit protein uL1 (239 aa).

This sequence belongs to the universal ribosomal protein uL1 family. In terms of assembly, part of the 50S ribosomal subunit.

Its function is as follows. Binds directly to 23S rRNA. The L1 stalk is quite mobile in the ribosome, and is involved in E site tRNA release. Functionally, protein L1 is also a translational repressor protein, it controls the translation of the L11 operon by binding to its mRNA. This is Large ribosomal subunit protein uL1 from Rickettsia canadensis (strain McKiel).